We begin with the raw amino-acid sequence, 189 residues long: UPF0398 protein LGAS_1023 (189 aa).

It belongs to the UPF0398 family.

The chain is UPF0398 protein LGAS_1023 from Lactobacillus gasseri (strain ATCC 33323 / DSM 20243 / BCRC 14619 / CIP 102991 / JCM 1131 / KCTC 3163 / NCIMB 11718 / NCTC 13722 / AM63).